Consider the following 334-residue polypeptide: Glycerol-3-phosphate dehydrogenase [NAD(P)+] (334 aa).

Tryptophan 13, arginine 33, and lysine 106 together coordinate NADPH. Positions 106, 137, and 139 each coordinate sn-glycerol 3-phosphate. Alanine 141 is a binding site for NADPH. The sn-glycerol 3-phosphate site is built by lysine 192, aspartate 245, serine 255, arginine 256, and asparagine 257. The active-site Proton acceptor is the lysine 192. Residue arginine 256 participates in NADPH binding. Valine 280 and glutamate 282 together coordinate NADPH.

Belongs to the NAD-dependent glycerol-3-phosphate dehydrogenase family.

The protein resides in the cytoplasm. The enzyme catalyses sn-glycerol 3-phosphate + NAD(+) = dihydroxyacetone phosphate + NADH + H(+). It catalyses the reaction sn-glycerol 3-phosphate + NADP(+) = dihydroxyacetone phosphate + NADPH + H(+). Its pathway is membrane lipid metabolism; glycerophospholipid metabolism. Functionally, catalyzes the reduction of the glycolytic intermediate dihydroxyacetone phosphate (DHAP) to sn-glycerol 3-phosphate (G3P), the key precursor for phospholipid synthesis. In Chlamydia abortus (strain DSM 27085 / S26/3) (Chlamydophila abortus), this protein is Glycerol-3-phosphate dehydrogenase [NAD(P)+].